A 314-amino-acid polypeptide reads, in one-letter code: DNA oxidative demethylase ALKBH2 (314 aa).

Residues 1 to 28 (MTNPLNSTAANRSNQPSSDGISDGQITN) show a composition bias toward polar residues. The disordered stretch occupies residues 1-75 (MTNPLNSTAA…KRFHYHQDQR (75 aa)). Residues 57–75 (NGKDDSDTKKRFHYHQDQR) are compositionally biased toward basic and acidic residues. Substrate contacts are provided by residues Trp-132 and 160-163 (ALVY). A Fe2OG dioxygenase domain is found at 194 to 314 (RFNSLLLNRY…RINLTFRLVL (121 aa)). A 2-oxoglutarate-binding site is contributed by 201 to 203 (NRY). The Fe cation site is built by His-213 and Asp-215. Asp-216 contributes to the substrate binding site. The tract at residues 242 to 271 (KKDEESSQGKTGDSGPAKKRLKRSSREDQQ) is disordered. His-293 is a binding site for Fe cation. Residues Arg-305 and 305 to 311 (RINLTFR) each bind 2-oxoglutarate.

Belongs to the alkB family. The cofactor is Fe(2+). As to expression, expressed ubiquitously, including in seedlings, leaves and flowers.

The protein localises to the nucleus. It carries out the reaction a methylated nucleobase within DNA + 2-oxoglutarate + O2 = a nucleobase within DNA + formaldehyde + succinate + CO2. Functionally, dioxygenase that repairs alkylated DNA containing 1-methyladenine and 1-ethenoadenine by oxidative demethylation. Accepts double-stranded and single-stranded substrates, with a preference for dsDNA over ssDNA. Confers resistance to methylating agents such as methylmethanesulphonate (MMS). This chain is DNA oxidative demethylase ALKBH2 (ALKBH2), found in Arabidopsis thaliana (Mouse-ear cress).